A 238-amino-acid chain; its full sequence is Zinc finger protein ZAT6 (238 aa).

The segment covering 1 to 15 (MALETLTSPRLSSPM) has biased composition (polar residues). The interval 1–42 (MALETLTSPRLSSPMPTLFQDSALGFHGSKGKRSKRSRSEFD) is disordered. The short motif at 30–38 (KGKRSKRSR) is the Nuclear localization signal element. 2 C2H2-type zinc fingers span residues 89 to 111 (YKCSVCDKAFSSYQALGGHKASH) and 148 to 170 (HVCSICHKSFATGQALGGHKRCH). The disordered stretch occupies residues 175–202 (NGGGVSSSVSNSEDVGSTSHVSSGHRGF). The segment covering 180-193 (SSSVSNSEDVGSTS) has biased composition (low complexity).

The protein localises to the nucleus. Probable transcription factor that regulates root development and phosphate (Pi) acquisition and homeostasis. Probably acts as a repressor of primary root growth and regulates Pi homeostasis through the control of root architecture. The chain is Zinc finger protein ZAT6 (ZAT6) from Arabidopsis thaliana (Mouse-ear cress).